The primary structure comprises 213 residues: Orotate phosphoribosyltransferase (213 aa).

Position 26 (lysine 26) interacts with 5-phospho-alpha-D-ribose 1-diphosphate. Position 34 to 35 (34 to 35 (FF)) interacts with orotate. Residues 72–73 (YK), arginine 99, lysine 100, lysine 103, histidine 105, and 124–132 (DDVITAGTA) each bind 5-phospho-alpha-D-ribose 1-diphosphate. Orotate contacts are provided by threonine 128 and arginine 156.

Belongs to the purine/pyrimidine phosphoribosyltransferase family. PyrE subfamily. Homodimer. It depends on Mg(2+) as a cofactor.

The catalysed reaction is orotidine 5'-phosphate + diphosphate = orotate + 5-phospho-alpha-D-ribose 1-diphosphate. Its pathway is pyrimidine metabolism; UMP biosynthesis via de novo pathway; UMP from orotate: step 1/2. Functionally, catalyzes the transfer of a ribosyl phosphate group from 5-phosphoribose 1-diphosphate to orotate, leading to the formation of orotidine monophosphate (OMP). This is Orotate phosphoribosyltransferase from Salmonella paratyphi A (strain ATCC 9150 / SARB42).